Here is a 463-residue protein sequence, read N- to C-terminus: ATP synthase subunit beta (463 aa).

152–159 lines the ATP pocket; it reads GGAGVGKT.

The protein belongs to the ATPase alpha/beta chains family. F-type ATPases have 2 components, CF(1) - the catalytic core - and CF(0) - the membrane proton channel. CF(1) has five subunits: alpha(3), beta(3), gamma(1), delta(1), epsilon(1). CF(0) has three main subunits: a(1), b(2) and c(9-12). The alpha and beta chains form an alternating ring which encloses part of the gamma chain. CF(1) is attached to CF(0) by a central stalk formed by the gamma and epsilon chains, while a peripheral stalk is formed by the delta and b chains.

It localises to the cell membrane. It carries out the reaction ATP + H2O + 4 H(+)(in) = ADP + phosphate + 5 H(+)(out). In terms of biological role, produces ATP from ADP in the presence of a proton gradient across the membrane. The catalytic sites are hosted primarily by the beta subunits. The polypeptide is ATP synthase subunit beta (Clostridium botulinum (strain Eklund 17B / Type B)).